A 452-amino-acid chain; its full sequence is Bifunctional protein GlmU (452 aa).

Residues 1-226 (MNFSAVILAA…PIEVEGVNDR (226 aa)) are pyrophosphorylase. Residues 8 to 11 (LAAG), Lys-22, Gln-73, 78 to 79 (GT), 100 to 102 (YGD), Gly-137, Glu-151, Asn-166, and Asn-224 each bind UDP-N-acetyl-alpha-D-glucosamine. Residue Asp-102 participates in Mg(2+) binding. Residue Asn-224 participates in Mg(2+) binding. The linker stretch occupies residues 227–247 (AQLARLERAYQAAQAQKLLEQ). Residues 248–452 (GVMLRDPSRF…IANWQRPTKK (205 aa)) form an N-acetyltransferase region. 2 residues coordinate UDP-N-acetyl-alpha-D-glucosamine: Arg-330 and Lys-348. His-360 (proton acceptor) is an active-site residue. Residues Tyr-363 and Asn-374 each contribute to the UDP-N-acetyl-alpha-D-glucosamine site. Acetyl-CoA contacts are provided by residues Ala-377, 383-384 (NY), Ser-402, Ala-420, and Arg-437.

It in the N-terminal section; belongs to the N-acetylglucosamine-1-phosphate uridyltransferase family. This sequence in the C-terminal section; belongs to the transferase hexapeptide repeat family. Homotrimer. It depends on Mg(2+) as a cofactor.

The protein localises to the cytoplasm. It carries out the reaction alpha-D-glucosamine 1-phosphate + acetyl-CoA = N-acetyl-alpha-D-glucosamine 1-phosphate + CoA + H(+). It catalyses the reaction N-acetyl-alpha-D-glucosamine 1-phosphate + UTP + H(+) = UDP-N-acetyl-alpha-D-glucosamine + diphosphate. The protein operates within nucleotide-sugar biosynthesis; UDP-N-acetyl-alpha-D-glucosamine biosynthesis; N-acetyl-alpha-D-glucosamine 1-phosphate from alpha-D-glucosamine 6-phosphate (route II): step 2/2. It participates in nucleotide-sugar biosynthesis; UDP-N-acetyl-alpha-D-glucosamine biosynthesis; UDP-N-acetyl-alpha-D-glucosamine from N-acetyl-alpha-D-glucosamine 1-phosphate: step 1/1. It functions in the pathway bacterial outer membrane biogenesis; LPS lipid A biosynthesis. Functionally, catalyzes the last two sequential reactions in the de novo biosynthetic pathway for UDP-N-acetylglucosamine (UDP-GlcNAc). The C-terminal domain catalyzes the transfer of acetyl group from acetyl coenzyme A to glucosamine-1-phosphate (GlcN-1-P) to produce N-acetylglucosamine-1-phosphate (GlcNAc-1-P), which is converted into UDP-GlcNAc by the transfer of uridine 5-monophosphate (from uridine 5-triphosphate), a reaction catalyzed by the N-terminal domain. The sequence is that of Bifunctional protein GlmU from Aliivibrio fischeri (strain ATCC 700601 / ES114) (Vibrio fischeri).